The sequence spans 276 residues: uncharacterized protein (276 aa).

10 consecutive transmembrane segments (helical) span residues 5 to 25 (IVLA…KYSV), 31 to 51 (IAIA…IIIL), 63 to 83 (VFAL…LGEV), 89 to 109 (VASV…AIFL), 119 to 139 (VGII…YANI), 142 to 162 (IALV…GKSL), 168 to 188 (PITL…PFLP), 200 to 220 (LIGS…LGWY), 231 to 251 (ASVF…ILLA), and 253 to 273 (PLTL…YIVV). EamA domains follow at residues 12–133 (TFWG…VISE) and 150–274 (VAAA…IVVR).

It belongs to the EamA transporter family.

It is found in the cell membrane. This is an uncharacterized protein from Archaeoglobus fulgidus (strain ATCC 49558 / DSM 4304 / JCM 9628 / NBRC 100126 / VC-16).